The sequence spans 144 residues: MSFKNKLKDYFMGDEYEYEYVDEDNQSEEPTQKEAKVNPKNVVNLSSVQQSNSRVVLIEPRNYNEAQEIADNIVNRRAVIINLQRVDHQQAKRIVDFLSGTVYAVKGDIQKLGAETFLCTPDNVEVSGTITEMLYEQEEYDKGW.

Belongs to the SepF family. As to quaternary structure, homodimer. Interacts with FtsZ.

Its subcellular location is the cytoplasm. Functionally, cell division protein that is part of the divisome complex and is recruited early to the Z-ring. Probably stimulates Z-ring formation, perhaps through the cross-linking of FtsZ protofilaments. Its function overlaps with FtsA. This is Cell division protein SepF from Oceanobacillus iheyensis (strain DSM 14371 / CIP 107618 / JCM 11309 / KCTC 3954 / HTE831).